Consider the following 161-residue polypeptide: Ribosome maturation factor RimP (161 aa).

This sequence belongs to the RimP family.

Its subcellular location is the cytoplasm. Functionally, required for maturation of 30S ribosomal subunits. In Desulfosudis oleivorans (strain DSM 6200 / JCM 39069 / Hxd3) (Desulfococcus oleovorans), this protein is Ribosome maturation factor RimP.